An 802-amino-acid polypeptide reads, in one-letter code: MEKLYCGMPLLLLVLLLASIDGSTQLQSSQSQTLLRLQQLLYYPKVLNSWNNYTDFCNSEPSPSLTVVCYEDSVTQLHIIGDNGTHMLPKSFSINSFVTTLVKLPDVKVLTFVSLGLWGWLPQKINRLSSLEILNVSSNFLFGPIPHELSSLATLQTLILDENMFSGELPDWIDSLPSLAVLSLRKNVLNGSLPSSLSSLSGLRVLALANNRFNGALPDLSHLTNLQVLDLEGNSFGPLFPRLSNKLVTLILSKNKFRSAVSAEEVSSLYQLQHLDLSYNTFVGPFPTSLMSLPAITYLNISHNKLTGRLSANLSCNSQLMFVDMSSNLLTGSLPTCLKPSSGTSRDVVYASNCLATTNEDQRPVSFCSNEALAVGILPQRRNKVSKVGIALGVTASILGVLLLAGALFVVLRRLNAKKTVTKSSPRLIRENASMGYTSKLLSDARYISQTMKLGGLGLPAYRTFSLEELEYATNNFESSAFMGEGSQGQIYRGRLKDGSFVAIRCLKMKKSCSTQNLMHHIELIAKLRHRHLVSVLGHCFECYLDDSTVSRMFFVFEYVPNGELRTWISDGHMGRLLTWEQRISVAIGVAKGIQFLHTGIVPGVYDNNLKMTDILLDNNLAAKLSSYNLPLLVEGLGKVGQVGSRSGPKGTPSIKDEDKIDIYDFGVILLELIVGRPLRAKSQVDVLKEQLQASISADDGARRSMVDPTVHRACSDQSLKTMMEICVRCLLKDPLERPSIEDVLWNLQFASQVQEGWLQNSNPSSNLGSPSPAASSLPPPSRLHVTTLESPRDSGCEEHER.

Residues 1–26 form the signal peptide; sequence MEKLYCGMPLLLLVLLLASIDGSTQL. The Extracellular segment spans residues 27-391; that stretch reads QSSQSQTLLR…RNKVSKVGIA (365 aa). N-linked (GlcNAc...) asparagine glycosylation is found at asparagine 52 and asparagine 83. LRR repeat units follow at residues 71–94, 104–128, 129–152, 153–176, 177–200, 201–225, 227–244, 245–268, 269–293, 294–317, and 319–341; these read EDSV…SFSI, LPDV…INRL, SSLE…LSSL, ATLQ…IDSL, PSLA…LSSL, SGLR…HLTN, QVLD…PRLS, NKLV…EVSS, LYQL…LMSL, PAIT…LSCN, and QLMF…LKPS. Asparagine 135 is a glycosylation site (N-linked (GlcNAc...) asparagine). N-linked (GlcNAc...) asparagine glycosylation is present at asparagine 190. N-linked (GlcNAc...) asparagine glycans are attached at residues asparagine 300 and asparagine 313. Residues 392–412 form a helical membrane-spanning segment; the sequence is LGVTASILGVLLLAGALFVVL. Topologically, residues 413-802 are cytoplasmic; that stretch reads RRLNAKKTVT…RDSGCEEHER (390 aa). Positions 477 to 759 constitute a Protein kinase domain; it reads FESSAFMGEG…FASQVQEGWL (283 aa). The interval 761 to 802 is disordered; it reads NSNPSSNLGSPSPAASSLPPPSRLHVTTLESPRDSGCEEHER. The segment covering 762–777 has biased composition (low complexity); that stretch reads SNPSSNLGSPSPAASS. The span at 791-802 shows a compositional bias: basic and acidic residues; the sequence is SPRDSGCEEHER.

Belongs to the protein kinase superfamily. Ser/Thr protein kinase family.

It is found in the cell membrane. The chain is Probable inactive leucine-rich repeat receptor-like protein kinase At3g03770 from Arabidopsis thaliana (Mouse-ear cress).